A 376-amino-acid polypeptide reads, in one-letter code: Protein-glutamate methylesterase/protein-glutamine glutaminase 1 (376 aa).

Positions 4 to 121 (KVLVVDDSSF…ARNRDEAVSL (118 aa)) constitute a Response regulatory domain. At Asp55 the chain carries 4-aspartylphosphate. The disordered stretch occupies residues 138–174 (RPVASSTPVQERPQSTLNRPTTGLRREAPAQAPVSRA). A compositionally biased stretch (polar residues) spans 141 to 158 (ASSTPVQERPQSTLNRPT). Residues 183-376 (SGKKYQLTAI…ERMLVEVGLA (194 aa)) enclose the CheB-type methylesterase domain. Active-site residues include Ser195, His222, and Asp318.

Belongs to the CheB family. Post-translationally, phosphorylated by CheA. Phosphorylation of the N-terminal regulatory domain activates the methylesterase activity.

Its subcellular location is the cytoplasm. It carries out the reaction [protein]-L-glutamate 5-O-methyl ester + H2O = L-glutamyl-[protein] + methanol + H(+). It catalyses the reaction L-glutaminyl-[protein] + H2O = L-glutamyl-[protein] + NH4(+). Functionally, involved in chemotaxis. Part of a chemotaxis signal transduction system that modulates chemotaxis in response to various stimuli. Catalyzes the demethylation of specific methylglutamate residues introduced into the chemoreceptors (methyl-accepting chemotaxis proteins or MCP) by CheR. Also mediates the irreversible deamidation of specific glutamine residues to glutamic acid. This Vibrio vulnificus (strain CMCP6) protein is Protein-glutamate methylesterase/protein-glutamine glutaminase 1.